Consider the following 92-residue polypeptide: Large ribosomal subunit protein eL43 (92 aa).

A C4-type zinc finger spans residues Cys39–Cys60.

This sequence belongs to the eukaryotic ribosomal protein eL43 family.

In Ostreococcus lucimarinus (strain CCE9901), this protein is Large ribosomal subunit protein eL43 (RPL37a).